The chain runs to 785 residues: Pre-rRNA-processing protein TSR1 homolog (785 aa).

The tract at residues 1–59 (MSTTGHRAGVFKKPSKPHKSWKGKRTKGEITSENRGREGVKQLTRSAHSTHRTISKDAR) is disordered. Residues 9–25 (GVFKKPSKPHKSWKGKR) are compositionally biased toward basic residues. Positions 26–40 (TKGEITSENRGREGV) are enriched in basic and acidic residues. One can recognise a Bms1-type G domain in the interval 83-243 (APCLVTVVSL…LRILNETKKK (161 aa)). The tract at residues 307-426 (PHPLKAHNKT…GETTASEMMF (120 aa)) is disordered. Over residues 376-409 (LDDEDDEDEEDSDEDMDDSDNEEVEDDSEEEEPM) the composition is skewed to acidic residues.

The protein belongs to the TRAFAC class translation factor GTPase superfamily. Bms1-like GTPase family. TSR1 subfamily.

Its subcellular location is the nucleus. It is found in the nucleolus. Functionally, required during maturation of the 40S ribosomal subunit in the nucleolus. The sequence is that of Pre-rRNA-processing protein TSR1 homolog (tag-151) from Caenorhabditis elegans.